The chain runs to 166 residues: Large ribosomal subunit protein uL10 (166 aa).

It belongs to the universal ribosomal protein uL10 family. In terms of assembly, part of the ribosomal stalk of the 50S ribosomal subunit. The N-terminus interacts with L11 and the large rRNA to form the base of the stalk. The C-terminus forms an elongated spine to which L12 dimers bind in a sequential fashion forming a multimeric L10(L12)X complex.

Functionally, forms part of the ribosomal stalk, playing a central role in the interaction of the ribosome with GTP-bound translation factors. This is Large ribosomal subunit protein uL10 from Shewanella woodyi (strain ATCC 51908 / MS32).